Consider the following 142-residue polypeptide: Endoribonuclease YbeY (142 aa).

3 residues coordinate Zn(2+): H100, H104, and H110.

This sequence belongs to the endoribonuclease YbeY family. Zn(2+) serves as cofactor.

It is found in the cytoplasm. In terms of biological role, single strand-specific metallo-endoribonuclease involved in late-stage 70S ribosome quality control and in maturation of the 3' terminus of the 16S rRNA. This is Endoribonuclease YbeY from Helicobacter pylori (strain G27).